Consider the following 87-residue polypeptide: uncharacterized protein (87 aa).

Helical transmembrane passes span 10-30 and 43-63; these read VAFT…FSIG and GYYI…QKVT.

It localises to the cell membrane. This is an uncharacterized protein from Bacillus subtilis (strain 168).